Here is a 430-residue protein sequence, read N- to C-terminus: Gamma-glutamyl phosphate reductase (430 aa).

This sequence belongs to the gamma-glutamyl phosphate reductase family.

The protein localises to the cytoplasm. It catalyses the reaction L-glutamate 5-semialdehyde + phosphate + NADP(+) = L-glutamyl 5-phosphate + NADPH + H(+). The protein operates within amino-acid biosynthesis; L-proline biosynthesis; L-glutamate 5-semialdehyde from L-glutamate: step 2/2. In terms of biological role, catalyzes the NADPH-dependent reduction of L-glutamate 5-phosphate into L-glutamate 5-semialdehyde and phosphate. The product spontaneously undergoes cyclization to form 1-pyrroline-5-carboxylate. The chain is Gamma-glutamyl phosphate reductase from Rhodopseudomonas palustris (strain TIE-1).